The primary structure comprises 194 residues: Histone H1.0 (194 aa).

Met-1 carries the N-acetylmethionine modification. Residues 1–11 are compositionally biased toward low complexity; sequence MTENSTSAPAA. A disordered region spans residues 1 to 28; it reads MTENSTSAPAAKPKRAKASKKSTDHPKY. Thr-2 is modified (N-acetylthreonine; in Histone H1.0, N-terminally processed). One can recognise an H15 domain in the interval 24–97; sequence DHPKYSDMIV…GASGSFRLAK (74 aa). Arg-42 carries the post-translational modification Citrulline. A disordered region spans residues 86–194; the sequence is GVGASGSFRL…SSAKRASKKK (109 aa). Ser-104 is modified (ADP-ribosylserine). Positions 105–194 are enriched in basic residues; sequence VAFKKTKKEV…SSAKRASKKK (90 aa).

This sequence belongs to the histone H1/H5 family. ADP-ribosylated on Ser-104 in response to DNA damage.

It localises to the nucleus. Its subcellular location is the chromosome. Its function is as follows. Histones H1 are necessary for the condensation of nucleosome chains into higher-order structures. The histones H1.0 are found in cells that are in terminal stages of differentiation or that have low rates of cell division. This chain is Histone H1.0 (H1-0), found in Mus musculus (Mouse).